Reading from the N-terminus, the 268-residue chain is Phosphatidylcholine synthase (268 aa).

Residues 1–27 are Cytoplasmic-facing; the sequence is MAARKAAKKLTDRIPRPKKKVTWPQAR. A helical membrane pass occupies residues 28–48; that stretch reads AFSVHLLTASGSFLAFLSLVA. Residues 49-53 are Periplasmic-facing; the sequence is ASEER. Residues 54 to 74 form a helical membrane-spanning segment; sequence WTAMFWWLGLALFVDGIDGPI. Residues 75–88 are Cytoplasmic-facing; sequence ARKLEVKEILPTWS. The helical transmembrane segment at 89–109 threads the bilayer; the sequence is GELLDNIIDYVTYVLIPAFAL. The Periplasmic portion of the chain corresponds to 110–112; sequence YQR. Residues 113–133 traverse the membrane as a helical segment; that stretch reads GFMGEGLSFLSAAIIVVSSAI. Residues 134–145 are Cytoplasmic-facing; sequence YYADTGMKTKEN. A helical membrane pass occupies residues 146 to 166; sequence FFKGFPVVWNMVVFTLFVIEP. The Periplasmic segment spans residues 167 to 168; the sequence is GQ. The chain crosses the membrane as a helical span at residues 169–189; it reads WVSFAVVVVAGILTFVPINFI. Over 190-203 the chain is Cytoplasmic; the sequence is HPVRVVRLRPFNLT. Residues 204-224 form a helical membrane-spanning segment; that stretch reads MTLLWCAFGALALAQAALAAF. The Periplasmic portion of the chain corresponds to 225-240; sequence YDQIGVLGAQVSTFIK. Residues 241–261 form a helical membrane-spanning segment; that stretch reads IGITITGLYLACIGGIMQFFP. The Cytoplasmic portion of the chain corresponds to 262–268; it reads NLGAKKA.

This sequence belongs to the CDP-alcohol phosphatidyltransferase class-I family. Requires Mn(2+) as cofactor.

Its subcellular location is the cell inner membrane. It carries out the reaction a CDP-1,2-diacyl-sn-glycerol + choline = a 1,2-diacyl-sn-glycero-3-phosphocholine + CMP + H(+). Condenses choline with CDP-diglyceride to produce phosphatidylcholine and CMP. In Mesorhizobium japonicum (strain LMG 29417 / CECT 9101 / MAFF 303099) (Mesorhizobium loti (strain MAFF 303099)), this protein is Phosphatidylcholine synthase (pcs).